Consider the following 297-residue polypeptide: GTPase Era (297 aa).

The region spanning 7–174 is the Era-type G domain; the sequence is HSGFVSIIGR…VQVVRDLLPE (168 aa). Positions 15–22 are G1; sequence GRPNVGKS. 15-22 lines the GTP pocket; the sequence is GRPNVGKS. The G2 stretch occupies residues 41–45; the sequence is QTTRN. The interval 62–65 is G3; that stretch reads DTPG. Residues 62 to 66 and 124 to 127 each bind GTP; these read DTPGI and NKVD. The interval 124–127 is G4; sequence NKVD. The segment at 153–155 is G5; sequence VSA. The region spanning 205–282 is the KH type-2 domain; sequence THDEVPYSVA…FLELFVRVSR (78 aa).

This sequence belongs to the TRAFAC class TrmE-Era-EngA-EngB-Septin-like GTPase superfamily. Era GTPase family. As to quaternary structure, monomer.

It localises to the cytoplasm. Its subcellular location is the cell inner membrane. An essential GTPase that binds both GDP and GTP, with rapid nucleotide exchange. Plays a role in 16S rRNA processing and 30S ribosomal subunit biogenesis and possibly also in cell cycle regulation and energy metabolism. This Geotalea daltonii (strain DSM 22248 / JCM 15807 / FRC-32) (Geobacter daltonii) protein is GTPase Era.